Reading from the N-terminus, the 929-residue chain is uncharacterized protein (929 aa).

Residues 1 to 257 form a disordered region; it reads MARKGKVNTL…SVLSSDDNDS (257 aa). The span at 23 to 34 shows a compositional bias: basic and acidic residues; sequence KQLENKILHSYE. Acidic residues-rich tracts occupy residues 35-50, 59-75, 107-117, 133-144, and 188-220; these read EESAGFDSEELEDNDE, SEDDEEIDSDEAFDEED, LNEEDDSDDSV, DENELVDLDTLL, and SESELTDSADNMNESDSESEIESSDSDHDDGEN. Residues serine 251, serine 555, and serine 557 each carry the phosphoserine modification. The disordered stretch occupies residues 602-729; that stretch reads DEMQAFEDEL…KADKKNHKLK (128 aa). Residues 605–619 show a composition bias toward acidic residues; the sequence is QAFEDELAGVPNEDD. The segment covering 670–681 has biased composition (basic and acidic residues); sequence NKPEMKEGQKKA. Positions 696–711 are enriched in polar residues; the sequence is ETNPWLQVPDQRTSSA. A compositionally biased stretch (basic and acidic residues) spans 712–729; it reads KKLDKNSSKADKKNHKLK. Phosphoserine is present on residues serine 758, serine 760, and serine 764. The span at 805–820 shows a compositional bias: basic and acidic residues; that stretch reads KEDWVQEDAPKEEDHS. The interval 805 to 843 is disordered; it reads KEDWVQEDAPKEEDHSLPGWGSWGGVGVKQRKTKPKVKK. The segment covering 833-843 has biased composition (basic residues); that stretch reads KQRKTKPKVKK.

The protein to yeast YML093w.

The protein resides in the nucleus. It is found in the nucleolus. This is an uncharacterized protein from Schizosaccharomyces pombe (strain 972 / ATCC 24843) (Fission yeast).